The chain runs to 181 residues: MAIATNNSRVYASLQLKNKQDSMYLAIGKTTPWTNEDAPPAPDPTTTTLTEVIGYKKVARVSLCREYLPSDDSKYPVVSYGSRKFTLIPDEDGYKEQAWMVYVEAEITGDELPTGTFRQVGIHTDLVSKASSEKKALLPTDVTDAGILQFFENRQQQNRTSDVILKEKFIITMENKKSVKQ.

This sequence belongs to the tevenvirinae baseplate structural protein gp8 family.

It localises to the virion. In terms of biological role, putative baseplate protein. The chain is Virion protein 3 from Enterococcus faecalis (Streptococcus faecalis).